Reading from the N-terminus, the 140-residue chain is uncharacterized protein (140 aa).

Over residues 1 to 19 (MGLCGSKTQPMPSQTTTVA) the composition is skewed to polar residues. Residues 1–140 (MGLCGSKTQP…ERERENMIYD (140 aa)) form a disordered region. The N-myristoyl glycine moiety is linked to residue Gly2. Cys4 carries the S-palmitoyl cysteine lipid modification. Residues 27–40 (INRDTVKSKQELRH) are compositionally biased toward basic and acidic residues. The segment covering 41–51 (KEKKDKKKKTQ) has biased composition (basic residues). Over residues 73–140 (DPSKNKVSPK…ERERENMIYD (68 aa)) the composition is skewed to basic and acidic residues.

This sequence to S.pombe new13. Post-translationally, myristoylated. The N-myristoylated protein is further palmitoylated by ERF2, PFA4 and slightly by PFA5, but not by PFA3.

The protein resides in the cytoplasm. It localises to the cytosol. This is an uncharacterized protein from Saccharomyces cerevisiae (strain ATCC 204508 / S288c) (Baker's yeast).